We begin with the raw amino-acid sequence, 349 residues long: GTPase Obg (349 aa).

An Obg domain is found at 1 to 159; it reads MKFLDEAKVY…RWIWLRLKLI (159 aa). Positions 160-327 constitute an OBG-type G domain; that stretch reads ADAGLVGLPN…ALRALVAVIG (168 aa). GTP contacts are provided by residues 166–173, 191–195, 212–215, 279–282, and 308–310; these read GLPNAGKS, FTTLH, DIPG, NKID, and SGV. Serine 173 and threonine 193 together coordinate Mg(2+).

The protein belongs to the TRAFAC class OBG-HflX-like GTPase superfamily. OBG GTPase family. As to quaternary structure, monomer. Mg(2+) serves as cofactor.

The protein localises to the cytoplasm. An essential GTPase which binds GTP, GDP and possibly (p)ppGpp with moderate affinity, with high nucleotide exchange rates and a fairly low GTP hydrolysis rate. Plays a role in control of the cell cycle, stress response, ribosome biogenesis and in those bacteria that undergo differentiation, in morphogenesis control. The polypeptide is GTPase Obg (Rhodopseudomonas palustris (strain BisA53)).